An 834-amino-acid polypeptide reads, in one-letter code: Transcription intermediary factor 1-beta (834 aa).

Residue Ala-2 is modified to N-acetylalanine. Low complexity predominate over residues 13–23; it reads AATAASAASGS. The segment at 13–56 is disordered; sequence AATAASAASGSPGSGEGSAGGEKRPAASSAAAASAAASSPAGGG. Phosphoserine occurs at positions 23, 26, and 30. Lys-35 participates in a covalent cross-link: Glycyl lysine isopeptide (Lys-Gly) (interchain with G-Cter in SUMO2). Over residues 38-52 the composition is skewed to low complexity; it reads AASSAAAASAAASSP. A Phosphoserine modification is found at Ser-51. The segment at 66–122 adopts an RING-type zinc-finger fold; that stretch reads CGVCRERLRPERDPRLLPCLHSACSACLGPATPAAANNSGDGGSAGDGAMVDCPVCK. Residue Lys-128 forms a Glycyl lysine isopeptide (Lys-Gly) (interchain with G-Cter in SUMO2) linkage. Ser-139 bears the Phosphoserine mark. The B box-type 1 zinc finger occupies 149 to 196; the sequence is DANQCCTSCEDNAPATSYCVECSEPLCETCVEAHQRVKYTKDHTVRST. Zn(2+) is bound by residues Cys-154, Cys-157, Cys-178, and His-182. A Glycyl lysine isopeptide (Lys-Gly) (interchain with G-Cter in SUMO2) cross-link involves residue Lys-200. Residues 205–246 form a B box-type 2 zinc finger; sequence ERTVYCNVHKHEPLVLFCESCDTLTCRDCQLNAHKDHQYQFL. Positions 210, 213, 233, and 238 each coordinate Zn(2+). The leucine zipper alpha helical coiled-coil region stretch occupies residues 247–377; the sequence is EDAVRNQRKL…LIYFQLHRAL (131 aa). Positions 248–377 are interaction with MAGEC2; that stretch reads DAVRNQRKLL…LIYFQLHRAL (130 aa). Glycyl lysine isopeptide (Lys-Gly) (interchain with G-Cter in SUMO2) cross-links involve residues Lys-255 and Lys-262. Lys-267 is subject to N6-acetyllysine. Lys-273 participates in a covalent cross-link: Glycyl lysine isopeptide (Lys-Gly) (interchain with G-Cter in SUMO2). The residue at position 305 (Lys-305) is an N6-acetyllysine; alternate. A Glycyl lysine isopeptide (Lys-Gly) (interchain with G-Cter in SUMO2); alternate cross-link involves residue Lys-305. Lys-320 is covalently cross-linked (Glycyl lysine isopeptide (Lys-Gly) (interchain with G-Cter in SUMO2)). An N6-acetyllysine modification is found at Lys-341. Lys-367 is covalently cross-linked (Glycyl lysine isopeptide (Lys-Gly) (interchain with G-Cter in SUMO2)). Residues 367–371 form an involved in binding PPP1CA region; the sequence is KLIYF. Lys-378 carries the N6-acetyllysine; alternate modification. A Glycyl lysine isopeptide (Lys-Gly) (interchain with G-Cter in SUMO2); alternate cross-link involves residue Lys-378. Lys-378 is covalently cross-linked (Glycyl lysine isopeptide (Lys-Gly) (interchain with G-Cter in SUMO1); alternate). A Glycyl lysine isopeptide (Lys-Gly) (interchain with G-Cter in SUMO2) cross-link involves residue Lys-408. Positions 412–480 are disordered; sequence ERPGTNSTGP…SRSGEGEVSG (69 aa). Ser-418 is modified (phosphoserine). Lys-435 is covalently cross-linked (Glycyl lysine isopeptide (Lys-Gly) (interchain with G-Cter in SUMO2)). Residues 435 to 444 are compositionally biased toward polar residues; that stretch reads KQGSGSSQPM. Ser-438, Ser-440, and Ser-454 each carry phosphoserine. A Glycyl lysine isopeptide (Lys-Gly) (interchain with G-Cter in SUMO2); alternate cross-link involves residue Lys-469. Lys-469 is covalently cross-linked (Glycyl lysine isopeptide (Lys-Gly) (interchain with G-Cter in SUMO1); alternate). At Arg-470 the chain carries Citrulline. Phosphoserine is present on Ser-471. Arg-472 carries the citrulline modification. 3 positions are modified to phosphoserine: Ser-473, Ser-479, and Ser-489. Positions 476 to 513 are HP1 box; the sequence is GEVSGLLRKVPRVSLERLDLDLTSDSQPPVFKVFPGST. The PxVxL motif signature appears at 481–494; it reads LLRKVPRVSLERLD. The residue at position 498 (Thr-498) is a Phosphothreonine. Ser-501 is modified (phosphoserine). Lys-507 is covalently cross-linked (Glycyl lysine isopeptide (Lys-Gly) (interchain with G-Cter in SUMO2)). A Glycyl lysine isopeptide (Lys-Gly) (interchain with G-Cter in SUMO2); alternate cross-link involves residue Lys-554. Lys-554 participates in a covalent cross-link: Glycyl lysine isopeptide (Lys-Gly) (interchain with G-Cter in SUMO); alternate. Residue Lys-575 forms a Glycyl lysine isopeptide (Lys-Gly) (interchain with G-Cter in SUMO2) linkage. Residues 581 to 602 form a disordered region; it reads LTEGPGAEGPRLASPSGSTSSG. Ser-594 carries the phosphoserine modification. The PHD-type zinc finger occupies 625–672; sequence ATICRVCQKPGDLVMCNQCEFCFHLDCHLPALQDVPGEEWSCSLCHVL. A Glycyl lysine isopeptide (Lys-Gly) (interchain with G-Cter in SUMO) cross-link involves residue Lys-676. 3 positions are modified to phosphoserine: Ser-683, Ser-689, and Ser-697. The Bromo domain occupies 695–799; the sequence is KLSPANQRKC…RFFETRMNDA (105 aa). Lys-750 participates in a covalent cross-link: Glycyl lysine isopeptide (Lys-Gly) (interchain with G-Cter in SUMO2); alternate. Lys-750 is covalently cross-linked (Glycyl lysine isopeptide (Lys-Gly) (interchain with G-Cter in SUMO1); alternate). Lys-750 participates in a covalent cross-link: Glycyl lysine isopeptide (Lys-Gly) (interchain with G-Cter in SUMO); alternate. Ser-752 carries the phosphoserine modification. Position 755 is a phosphotyrosine (Tyr-755). Ser-757 carries the phosphoserine modification. N6-acetyllysine; alternate occurs at positions 770, 774, and 779. Residues Lys-770, Lys-774, and Lys-779 each participate in a glycyl lysine isopeptide (Lys-Gly) (interchain with G-Cter in SUMO2); alternate cross-link. A Glycyl lysine isopeptide (Lys-Gly) (interchain with G-Cter in SUMO1); alternate cross-link involves residue Lys-779. Ser-784 is modified (phosphoserine). Residue Lys-804 forms a Glycyl lysine isopeptide (Lys-Gly) (interchain with G-Cter in SUMO2) linkage. A Phosphoserine; by ATM and ATR and dsDNA kinase modification is found at Ser-824.

It belongs to the TRIM/RBCC family. As to quaternary structure, oligomer; the RBCC domain homotrimerizes and interacts with one molecule of KRAB to form the KRAB-KAP1 corepressor complex. Interacts with SETX. Binding to a KRAB domain is an absolute requirement for silencing gene expression. Interacts with a number of KRAB-ZFP proteins including ZNF10, ZFP53, ZFP68, ZNF382 and ZNF256. Interacts with NCOR1, NR3C1 and CHD3. Interacts with CEBPB (via the RING-type and PHD-type zinc fingers). Interacts with CBX5 (via the PxVxL motif); the interaction occurs in interphase nuclei and competes for binding POGZ. Interacts with POGZ; the interaction competes for interaction with CBX5. Interacts with SETDB1; the interaction is enhanced by KAP1 sumoylation, stimulates SETDB1 histone methyltransferase activity and gene silencing. Interacts (via the PHD-type zinc finger) with UBE2I; the interaction is required for sumoylation and repressor activity. Component of the TRIM28/KAP1-ERBB4-MDM2 complex involved in connecting growth factor and DNA damage responses. Interacts directly with ERBB4; the interaction represses ERBB4-mediated transcription activity. Interacts with MDM2; the interaction contributes to p53/TP53 inactivation. Component of the TRIM28/KAP1-MDM2-p53/TP53; involved in regulating p53/TP53 stabilization and activity. Interacts (via the leucine zipper alpha helical coiled-coil) with E2F1 (central region); the interaction inhibits E2F1 acetylation and transcriptional activity. Interacts with PPP1CA; the interaction dephosphorylates TRIM28 at Ser-824 and forms a complex at the p21 promoter site. Interacts with PPP1CB; the interaction is weak but is increased on dephosphorylation at Ser-824. Interacts with CEBPB and NR3C1. Interacts with CBX5 (via the PxVxL motif); the interaction occurs in interphase nuclei and competes for binding POGZ. Component of a ternary complex that includes TRIM28, a HP1 protein (CBX1, CBX3 OR CBX5), a KRAB domain-containing protein, and DNA. Interacts with SMARCAD1. Interacts with, and sumoylates IRF7. Interacts with MAGEC2. Part of a complex composed of TRIM28, HDAC1, HDAC2 and EHMT2. Interacts (via the RBCC domain) with KOX1 (via the KRAB domain), ZNF268 (via the KRAB domain) and ZNF300 (via the KRAB domain); the interactions increase KOX1, ZNF268 and ZNF300 nuclear localization activities. Interacts with AICDA. The large PER complex involved in the histone methylation is composed of at least PER2, CBX3, TRIM28, SUV39H1 and/or SUV39H2; CBX3 mediates the formation of the complex. Interacts with NR4A3; the interactions potentiates NR4A3 activity on NurRE promoter. Interacts (unphosphorylated or phosphorylated form) with ZBTB1 (via BTB domain). Probably part of a corepressor complex containing ZNF304, TRIM28, SETDB1 and DNMT1. Interacts with ATRX. Forms a complex with ATRX, SETDB1 and ZNF274. Interacts with ZFP568; the interaction mediates ZFP568 transcriptional repression activity. Interacts with RRP1B. Interacts with CRY1. Interacts with ZNF263; recruited to the SIX3 promoter along with other proteins involved in chromatin modification and transcriptional corepression where it contributes to transcriptional repression. Interacts with CYREN (via XLF motif). Interacts with TRIM17; this interaction prevents TRIM28 activity. Interacts with ZNF746. Interacts with PHF13. Interacts with ZNF354C. Interacts with ZNF432; the interaction is independent of PARP1. ATM-induced phosphorylation on Ser-824 represses sumoylation leading to the de-repression of expression of a subset of genes involved in cell cycle control and apoptosis in response to genotoxic stress. Dephosphorylation by the phosphatases, PPP1CA and PP1CB forms, allows sumoylation and expression of TRIM28 target genes. In terms of processing, sumoylation/desumoylation events regulate TRIM28-mediated transcriptional repression. Sumoylation is required for interaction with CHD3 and SETDB1 and the corepressor activity. Represses and is repressed by Ser-824 phosphorylation. Enhances the TRIM28 corepressor activity, inhibiting transcriptional activity of a number of genes including GADD45A and CDKN1A/p21. Lys-554, Lys-779 and Lys-804 are the major sites of sumoylation. In response to Dox-induced DNA damage, enhanced phosphorylation on Ser-824 prevents sumoylation and allows de-repression of CDKN1A/p21. Post-translationally, auto-ubiquitinated; enhanced by MAGEA2 and MAGEC2. Citrullinated by PADI4. In terms of processing, ADP-ribosylated by SIRT6, promoting TRIM28/KAP1 interaction with CBX5, thereby contributing to the packaging of LINE-1 retrotransposon elements into transcriptionally repressive heterochromatin.

It localises to the nucleus. The enzyme catalyses S-ubiquitinyl-[E2 ubiquitin-conjugating enzyme]-L-cysteine + [acceptor protein]-L-lysine = [E2 ubiquitin-conjugating enzyme]-L-cysteine + N(6)-ubiquitinyl-[acceptor protein]-L-lysine.. Its pathway is protein modification; protein sumoylation. Functionally, nuclear corepressor for KRAB domain-containing zinc finger proteins (KRAB-ZFPs). Mediates gene silencing by recruiting CHD3, a subunit of the nucleosome remodeling and deacetylation (NuRD) complex, and SETDB1 (which specifically methylates histone H3 at 'Lys-9' (H3K9me)) to the promoter regions of KRAB target genes. Enhances transcriptional repression by coordinating the increase in H3K9me, the decrease in histone H3 'Lys-9 and 'Lys-14' acetylation (H3K9ac and H3K14ac, respectively) and the disposition of HP1 proteins to silence gene expression. Recruitment of SETDB1 induces heterochromatinization. May play a role as a coactivator for CEBPB and NR3C1 in the transcriptional activation of ORM1. Also a corepressor for ERBB4. Inhibits E2F1 activity by stimulating E2F1-HDAC1 complex formation and inhibiting E2F1 acetylation. May serve as a partial backup to prevent E2F1-mediated apoptosis in the absence of RB1. Important regulator of CDKN1A/p21(CIP1). Has E3 SUMO-protein ligase activity toward itself via its PHD-type zinc finger. Specifically sumoylates IRF7, thereby inhibiting its transactivation activity. Ubiquitinates p53/TP53 leading to its proteasomal degradation; the function is enhanced by MAGEC2 and MAGEA2, and possibly MAGEA3 and MAGEA6. Mediates the nuclear localization of KOX1, ZNF268 and ZNF300 transcription factors. Probably forms a corepressor complex required for activated KRAS-mediated promoter hypermethylation and transcriptional silencing of tumor suppressor genes (TSGs) or other tumor-related genes in colorectal cancer (CRC) cells. Required to maintain a transcriptionally repressive state of genes in undifferentiated embryonic stem cells (ESCs). In ESCs, in collaboration with SETDB1, is also required for H3K9me3 and silencing of endogenous and introduced retroviruses in a DNA-methylation independent-pathway. Associates at promoter regions of tumor suppressor genes (TSGs) leading to their gene silencing. The SETDB1-TRIM28-ZNF274 complex may play a role in recruiting ATRX to the 3'-exons of zinc-finger coding genes with atypical chromatin signatures to establish or maintain/protect H3K9me3 at these transcriptionally active regions. Acts as a corepressor for ZFP568. The chain is Transcription intermediary factor 1-beta from Mus musculus (Mouse).